A 171-amino-acid polypeptide reads, in one-letter code: Adenine phosphoribosyltransferase (171 aa).

Belongs to the purine/pyrimidine phosphoribosyltransferase family. In terms of assembly, homodimer.

It is found in the cytoplasm. It catalyses the reaction AMP + diphosphate = 5-phospho-alpha-D-ribose 1-diphosphate + adenine. Its pathway is purine metabolism; AMP biosynthesis via salvage pathway; AMP from adenine: step 1/1. Functionally, catalyzes a salvage reaction resulting in the formation of AMP, that is energically less costly than de novo synthesis. This is Adenine phosphoribosyltransferase from Nitrosococcus oceani (strain ATCC 19707 / BCRC 17464 / JCM 30415 / NCIMB 11848 / C-107).